A 312-amino-acid chain; its full sequence is uncharacterized protein (312 aa).

Transmembrane regions (helical) follow at residues 4 to 24 (AIYL…TYAE) and 286 to 306 (YLLS…AIYL).

It is found in the cell membrane. This is an uncharacterized protein from Methanocaldococcus jannaschii (strain ATCC 43067 / DSM 2661 / JAL-1 / JCM 10045 / NBRC 100440) (Methanococcus jannaschii).